The primary structure comprises 328 residues: Lactamase-like protein nscB (328 aa).

Zn(2+)-binding residues include His-97, His-99, Asp-101, and His-102. Catalysis depends on Asp-101, which acts as the Proton donor/acceptor.

It belongs to the metallo-beta-lactamase superfamily. Requires Zn(2+) as cofactor.

Its pathway is secondary metabolite biosynthesis. Its function is as follows. Lactamase-like protein; part of the gene cluster that mediates the biosynthesis of neosartoricin, a prenylated anthracenone that exhibits T-cell antiproliferative activity, suggestive of a physiological role as an immunosuppressive agent. The non-reducing polyketide synthase nscA probably synthesizes and cyclizes the decaketide backbone. The hydrolase nscB then mediates the product release through hydrolysis followed by spontaneous decarboxylation. The prenyltransferase nscD catalyzes the addition of the dimethylallyl group to the aromatic C5. The FAD-dependent monooxygenase nscC is then responsible for the stereospecific hydroxylation at C2. There is no gene encoding O-acetyltransferase in the nsc gene cluster; thus, the last step of 2-O-acetylation leading to neosartoricin may be catalyzed by an unidentified O-acetyltransferase. The chain is Lactamase-like protein nscB from Neosartorya fischeri (strain ATCC 1020 / DSM 3700 / CBS 544.65 / FGSC A1164 / JCM 1740 / NRRL 181 / WB 181) (Aspergillus fischerianus).